Reading from the N-terminus, the 133-residue chain is DNA-binding protein inhibitor ID-2-A (133 aa).

A bHLH domain is found at 23 to 75 (ARSKTPVDDPMSLLYNMNDCYSKLKELVPSIPQNKKVSKMEILQHVIDYILDL). The short motif at 106-115 (LNTDISILSL) is the Nuclear export signal element.

In terms of assembly, heterodimer with other HLH proteins. In the embryo, expressed in a range of tissues, with primary expression in the developing pronephros; expressed in the pronephric anlage, and by the swimming tadpole stages expressed robustly in the pronephric tubules and weakly in the pronephric duct. Expressed in the secondary heart field. In the developing nervous system, expressed in the neural crest and in the neural folds during neurula stages, and at stage 20 in the neural tube, ventral mesoderm and mid-hindbrain boundary. By early tailbud stages, expressed in the neural tube, somites and branchial arches. In tadpoles (stage 37/38), expressed in the heart, eye, otic vesicle, somites and branchial arches. Also expressed in migrating muscle cells. Expressed at a low level in limbs, with expression decreasing as limbs develop, but expressed at a high level in blastemas (regenerated limbs), where expression is localized primarily to the blastemal epidermis. Widely expressed in adults with highest expression in the spleen, skin, intestine and brain, and at a much lower level in testis and heart.

The protein localises to the cytoplasm. It is found in the nucleus. In terms of biological role, transcriptional regulator (lacking a basic DNA binding domain) which negatively regulates the basic helix-loop-helix (bHLH) transcription factors by forming heterodimers and inhibiting their DNA binding and transcriptional activity. Inhibits the activity of both neurogenic (neurod1/neuroD) and myogenic (myod1/myoD) bHLH factors. May play a role in the regulation of the circadian clock. This chain is DNA-binding protein inhibitor ID-2-A (id2-a), found in Xenopus laevis (African clawed frog).